We begin with the raw amino-acid sequence, 673 residues long: Probable urea active transporter 2 (673 aa).

The next 14 helical transmembrane spans lie at G8 to I28, I83 to L103, V132 to G152, T164 to L184, V196 to S218, M249 to G269, L287 to A307, I336 to F356, Q391 to S411, L424 to N446, F451 to S471, F492 to I512, I559 to G579, and L592 to L612.

This sequence belongs to the sodium:solute symporter (SSF) (TC 2.A.21) family.

It is found in the endoplasmic reticulum membrane. Its function is as follows. Involved in active transport of urea. The protein is Probable urea active transporter 2 (dur3-2) of Schizosaccharomyces pombe (strain 972 / ATCC 24843) (Fission yeast).